The sequence spans 133 residues: Interleukin-5 (133 aa).

Positions 1–20 (MRRMLLHLSVLTLSCVWATA) are cleaved as a signal peptide. Residues N46, N75, and N89 are each glycosylated (N-linked (GlcNAc...) asparagine).

Belongs to the IL-5 family. As to quaternary structure, homodimer; disulfide-linked. Interacts with IL5RA. Interacts with CSF2RB. In terms of tissue distribution, expressed in lymphoid cells, including spleen, thymus, lymph nodes and peripheral blood mononuclear cells.

Its subcellular location is the secreted. Its function is as follows. Homodimeric cytokine expressed predominantly by T-lymphocytes and NK cells that plays an important role in the survival, differentiation, and chemotaxis of eosinophils. Also acts on activated and resting B-cells to induce immunoglobulin production, growth, and differentiation. Mechanistically, exerts its biological effects through a receptor composed of IL5RA subunit and the cytokine receptor common subunit beta/CSF2RB. Binding to the receptor leads to activation of various kinases including LYN, SYK and JAK2 and thereby propagates signals through the RAS-MAPK and JAK-STAT5 pathways respectively. The chain is Interleukin-5 (Il5) from Mus musculus (Mouse).